A 196-amino-acid polypeptide reads, in one-letter code: Gastrula zinc finger protein xLCGF3.1 (196 aa).

7 consecutive C2H2-type zinc fingers follow at residues 6-28, 34-56, 62-84, 90-112, 118-140, 146-168, and 174-196; these read FMCTKCGKCLSTKQKLNLHHMTH, FTCTECGKGFSRNDYLKIHQTIH, FTCIECGKGFSINRTLKLHYMTH, FTCTECSKGFSTKRDLEIHQTMH, LTCTECSKGFSTKHKLSIHQRVH, FTCTECNKGFSRNDHLQIHQTVH, and FTCTECSKCFSRKELLKIHQIVH.

This sequence belongs to the krueppel C2H2-type zinc-finger protein family.

It is found in the nucleus. Its function is as follows. May be involved in transcriptional regulation. The protein is Gastrula zinc finger protein xLCGF3.1 of Xenopus laevis (African clawed frog).